Consider the following 66-residue polypeptide: Large ribosomal subunit protein bL35 (66 aa).

Belongs to the bacterial ribosomal protein bL35 family.

This Jannaschia sp. (strain CCS1) protein is Large ribosomal subunit protein bL35.